The chain runs to 538 residues: Acetylcholine receptor subunit alpha-type acr-7 (538 aa).

An N-terminal signal peptide occupies residues 1–27 (MMVQSIQIVLPVALFFLIVFNGFTVEG). The Extracellular portion of the chain corresponds to 28 to 250 (SKKEAQLYRD…LHLRRRTFYY (223 aa)). Asparagine 41 and asparagine 101 each carry an N-linked (GlcNAc...) asparagine glycan. 2 disulfides stabilise this stretch: cysteine 160-cysteine 174 and cysteine 229-cysteine 230. 3 consecutive transmembrane segments (helical) span residues 251–271 (VFNVVLPTLLVSFMSLLAFCL), 280–300 (IGLQTTILLSVCFFLTILSEM), and 313–333 (VFFSALTFIVAMSTTFTILVL). The Cytoplasmic portion of the chain corresponds to 334–513 (NIRYRQITNH…FAAQAVDRFC (180 aa)). Residues 514 to 534 (LIIFTIVFIICCFIFVAIPPI) form a helical membrane-spanning segment.

The protein belongs to the ligand-gated ion channel (TC 1.A.9) family. Acetylcholine receptor (TC 1.A.9.1) subfamily. In terms of assembly, forms a homooligomeric channel blocked by alpha-bungarotoxin. The structure is probably pentameric.

It is found in the postsynaptic cell membrane. The protein localises to the cell membrane. Its function is as follows. After binding acetylcholine, the AChR responds by an extensive change in conformation that affects all subunits and leads to opening of an ion-conducting channel across the plasma membrane. The sequence is that of Acetylcholine receptor subunit alpha-type acr-7 (acr-7) from Caenorhabditis elegans.